The following is a 158-amino-acid chain: Phosphopantetheine adenylyltransferase (158 aa).

A substrate-binding site is contributed by Thr-10. ATP contacts are provided by residues 10–11 and His-18; that span reads TF. Residues Lys-42, Leu-74, and Arg-88 each contribute to the substrate site. ATP-binding positions include 89 to 91, Glu-99, and 124 to 130; these read GLR and NSFISST.

It belongs to the bacterial CoaD family. Homohexamer. Mg(2+) is required as a cofactor.

Its subcellular location is the cytoplasm. It carries out the reaction (R)-4'-phosphopantetheine + ATP + H(+) = 3'-dephospho-CoA + diphosphate. It functions in the pathway cofactor biosynthesis; coenzyme A biosynthesis; CoA from (R)-pantothenate: step 4/5. Reversibly transfers an adenylyl group from ATP to 4'-phosphopantetheine, yielding dephospho-CoA (dPCoA) and pyrophosphate. The polypeptide is Phosphopantetheine adenylyltransferase (Shewanella sediminis (strain HAW-EB3)).